The following is a 281-amino-acid chain: MASFIASDQDVKNFLTAPSMNDQEGIGFAYATDEAVLKALIPAPLKLMAPVVCGYVVHMGKPTFSAPYLEESLFALVSYKDKMMGAYPINLLLHGPGAESGVIAGREGAGIPKKLADDIELRRNDNSATATVERHGKTLLNVSWTAGELNDPSIMKQFAGQLALGKEAEMNSFFYKYDIDQHEDGTNHFSNVQLVATQLRSLADQVEPGNLSIQLESTDDDPFGELKVLKPLGAAWFHFDTSVMFNTLKLDEVDAATTMPKLLTGRYDRSFFNPKAATYII.

The protein belongs to the ADC family.

The protein localises to the cytoplasm. It carries out the reaction 10-oxo-(12Z)-octadecenoate = 10-oxo-(11E)-octadecenoate. Its pathway is lipid metabolism; fatty acid metabolism. Its function is as follows. Is involved in a saturation metabolic pathway of polyunsaturated fatty acids, that detoxifies unsaturated fatty acids and generates hydroxy fatty acids, oxo fatty acids, conjugated fatty acids such as conjugated linoleic acids (CLAs), and partially saturated trans-fatty acids as intermediates. CLA-DC catalyzes the migration of the carbon-carbon double bond in 10-oxo-(12Z)-octadecenoate to produce 10-oxo-(11E)-octadecenoate, during linoleate metabolism. As part of the gut microbiome, this enzyme modifies host fatty acid composition and is expected to improve human health by altering lipid metabolism related to the onset of metabolic syndrome. This Lactiplantibacillus plantarum (Lactobacillus plantarum) protein is CLA biosynthesis isomerase.